A 510-amino-acid chain; its full sequence is ATP synthase subunit alpha (510 aa).

An ATP-binding site is contributed by Gly169–Thr176.

Belongs to the ATPase alpha/beta chains family. In terms of assembly, F-type ATPases have 2 components, CF(1) - the catalytic core - and CF(0) - the membrane proton channel. CF(1) has five subunits: alpha(3), beta(3), gamma(1), delta(1), epsilon(1). CF(0) has three main subunits: a(1), b(2) and c(9-12). The alpha and beta chains form an alternating ring which encloses part of the gamma chain. CF(1) is attached to CF(0) by a central stalk formed by the gamma and epsilon chains, while a peripheral stalk is formed by the delta and b chains.

It is found in the cell inner membrane. The catalysed reaction is ATP + H2O + 4 H(+)(in) = ADP + phosphate + 5 H(+)(out). Produces ATP from ADP in the presence of a proton gradient across the membrane. The alpha chain is a regulatory subunit. The chain is ATP synthase subunit alpha from Afipia carboxidovorans (strain ATCC 49405 / DSM 1227 / KCTC 32145 / OM5) (Oligotropha carboxidovorans).